A 1501-amino-acid polypeptide reads, in one-letter code: Multidrug resistance protein CDR1 (1501 aa).

The disordered stretch occupies residues 1-30 (MSDSKMSSQDESKLEKAISQDSSSENHSIN). At 1–513 (MSDSKMSSQD…NFLRMKGDPS (513 aa)) the chain is on the cytoplasmic side. Over residues 8–18 (SQDESKLEKAI) the composition is skewed to basic and acidic residues. One can recognise an ABC transporter 1 domain in the interval 150-404 (LATEGFRHFQ…FEKMGWKCPQ (255 aa)). A helical transmembrane segment spans residues 514-534 (IPIFSVFGQLVMGLILSSVFY). N-linked (GlcNAc...) asparagine glycosylation is present at N535. A run of 4 helical transmembrane segments spans residues 549–569 (AMFFAVLFNAFSSLLEIMSLF), 598–618 (LPVKLAMSMSFNFVFYFMVNF), 623–643 (GRFFFYWLMCIWCTFVMSHLF), and 655–675 (GAMTPATVLLLAMVIYTGFVI). N724 carries an N-linked (GlcNAc...) asparagine glycan. The helical transmembrane segment at 765-785 (LGITIGFAVFFLAIYIALTEF) threads the bilayer. Residues 786-1195 (NKGAMQKGEI…TIVQDWRSPG (410 aa)) lie on the Cytoplasmic side of the membrane. An ABC transporter 2 domain is found at 859 to 1103 (FFWRDLTYQV…MINYFEKYGA (245 aa)). Position 895–902 (895–902 (GASGAGKT)) interacts with ATP. 6 helical membrane passes run 1196–1216 (YIYSKIFLVVSAALFNGFSFF), 1230–1250 (FSVFMFFIPFNTLVQQMLPYF), 1281–1301 (IPYQVAVGTIAFFCWYYPLGL), 1315–1335 (GVLMWMLVTAFYVYTATMGQL), 1356–1376 (MCLNFCGVLAGPDVLPGFWIF), and 1467–1487 (FGIFIAFIAINIILTVIFYWL).

This sequence belongs to the ABC transporter superfamily. ABCG family. PDR (TC 3.A.1.205) subfamily.

It localises to the membrane. Transporter, whose physiological function is not yet established. Confers resistance to the chemical cycloheximide. This chain is Multidrug resistance protein CDR1 (CDR1), found in Candida albicans (Yeast).